A 214-amino-acid chain; its full sequence is Homeobox protein HEX homolog pha-2 (214 aa).

Disordered regions lie at residues Met1–Glu50 and Arg180–Gly214. A compositionally biased stretch (low complexity) spans Ser24–Glu34. The segment covering Cys35–Thr44 has biased composition (polar residues). Positions Arg124–Arg183 form a DNA-binding region, homeobox. Polar residues predominate over residues Ser200 to Gly214.

The protein resides in the nucleus. Its function is as follows. Transcriptional repressor. Involved in pharyngeal development and required for the formation of the pharyngeal isthmus. Plays a role in modulating cytoskeleton in the muscle cells of the isthmus. Regulates expression of the acetylcholinesterase genes ace-1 and ace-2. May regulate its own expression. This chain is Homeobox protein HEX homolog pha-2, found in Caenorhabditis elegans.